A 98-amino-acid chain; its full sequence is Aspartyl/glutamyl-tRNA(Asn/Gln) amidotransferase subunit C (98 aa).

Positions 75–98 (EQALSGAPDSDDNRFKVPAILDEA) are disordered.

This sequence belongs to the GatC family. Heterotrimer of A, B and C subunits.

The catalysed reaction is L-glutamyl-tRNA(Gln) + L-glutamine + ATP + H2O = L-glutaminyl-tRNA(Gln) + L-glutamate + ADP + phosphate + H(+). It catalyses the reaction L-aspartyl-tRNA(Asn) + L-glutamine + ATP + H2O = L-asparaginyl-tRNA(Asn) + L-glutamate + ADP + phosphate + 2 H(+). Its function is as follows. Allows the formation of correctly charged Asn-tRNA(Asn) or Gln-tRNA(Gln) through the transamidation of misacylated Asp-tRNA(Asn) or Glu-tRNA(Gln) in organisms which lack either or both of asparaginyl-tRNA or glutaminyl-tRNA synthetases. The reaction takes place in the presence of glutamine and ATP through an activated phospho-Asp-tRNA(Asn) or phospho-Glu-tRNA(Gln). The sequence is that of Aspartyl/glutamyl-tRNA(Asn/Gln) amidotransferase subunit C from Pseudarthrobacter chlorophenolicus (strain ATCC 700700 / DSM 12829 / CIP 107037 / JCM 12360 / KCTC 9906 / NCIMB 13794 / A6) (Arthrobacter chlorophenolicus).